The primary structure comprises 481 residues: Sterol 14-alpha demethylase (481 aa).

A helical membrane pass occupies residues 1–21 (MFIEAIVLALTALILYSVYSV). Cys-422 serves as a coordination point for heme.

The protein belongs to the cytochrome P450 family. Requires heme as cofactor.

The protein localises to the membrane. The catalysed reaction is a 14alpha-methyl steroid + 3 reduced [NADPH--hemoprotein reductase] + 3 O2 = a Delta(14) steroid + formate + 3 oxidized [NADPH--hemoprotein reductase] + 4 H2O + 4 H(+). Its pathway is steroid biosynthesis; zymosterol biosynthesis; zymosterol from lanosterol: step 1/6. Catalyzes C14-demethylation of lanosterol which is critical for ergosterol biosynthesis. It transforms lanosterol into 4,4'-dimethyl cholesta-8,14,24-triene-3-beta-ol. Favors C4 dimethylated substrates, the substrate preference order is 24-methylenedihydrolanosterol &gt; 24,25-dihydrolanosterol &gt; lanosterol &gt; obtusifoliol &gt; norlanosterol. The chain is Sterol 14-alpha demethylase from Trypanosoma cruzi (strain CL Brener).